A 240-amino-acid polypeptide reads, in one-letter code: Proteasome subunit alpha (240 aa).

Belongs to the peptidase T1A family. As to quaternary structure, the 20S proteasome core is composed of 14 alpha and 14 beta subunits that assemble into four stacked heptameric rings, resulting in a barrel-shaped structure. The two inner rings, each composed of seven catalytic beta subunits, are sandwiched by two outer rings, each composed of seven alpha subunits. The catalytic chamber with the active sites is on the inside of the barrel. Has a gated structure, the ends of the cylinder being occluded by the N-termini of the alpha-subunits. Is capped by the proteasome-associated ATPase, ARC.

It localises to the cytoplasm. The protein operates within protein degradation; proteasomal Pup-dependent pathway. Its activity is regulated as follows. The formation of the proteasomal ATPase ARC-20S proteasome complex, likely via the docking of the C-termini of ARC into the intersubunit pockets in the alpha-rings, may trigger opening of the gate for substrate entry. Interconversion between the open-gate and close-gate conformations leads to a dynamic regulation of the 20S proteasome proteolysis activity. In terms of biological role, component of the proteasome core, a large protease complex with broad specificity involved in protein degradation. This chain is Proteasome subunit alpha, found in Frankia casuarinae (strain DSM 45818 / CECT 9043 / HFP020203 / CcI3).